The chain runs to 212 residues: Ribonuclease HII (212 aa).

The RNase H type-2 domain maps to 17-211; sequence ANLAGIDEAG…VIEALLSLEQ (195 aa). Residues D23, E24, and D120 each contribute to the a divalent metal cation site.

Belongs to the RNase HII family. It depends on Mn(2+) as a cofactor. Requires Mg(2+) as cofactor.

The protein resides in the cytoplasm. The catalysed reaction is Endonucleolytic cleavage to 5'-phosphomonoester.. Its function is as follows. Endonuclease that specifically degrades the RNA of RNA-DNA hybrids. This Chloroflexus aurantiacus (strain ATCC 29364 / DSM 637 / Y-400-fl) protein is Ribonuclease HII.